A 546-amino-acid polypeptide reads, in one-letter code: uncharacterized protein (546 aa).

The region spanning 52-123 (SVAELRDVQP…NTIEQLLQEN (72 aa)) is the SLH domain.

Belongs to the OprB family.

This is an uncharacterized protein from Synechocystis sp. (strain ATCC 27184 / PCC 6803 / Kazusa).